We begin with the raw amino-acid sequence, 78 residues long: MAAVCQVTGATPGFGHSISHSHRRTKRRFDPNIQKKTYYVPSLRRNVTLTLSAKGIKVIDARGIEAVVKDLLARGEKI.

It belongs to the bacterial ribosomal protein bL28 family.

The chain is Large ribosomal subunit protein bL28 from Leifsonia xyli subsp. xyli (strain CTCB07).